The primary structure comprises 120 residues: NAD(P)H-quinone oxidoreductase subunit 3, chloroplastic (120 aa).

3 helical membrane-spanning segments follow: residues 10–30 (FWFFLIIGAIIPTLAFTTSKL), 64–84 (MFALVFVIFDVETIFLYPWAM), and 89–109 (LGVYGFIEALIFVLILVIGLV).

It belongs to the complex I subunit 3 family. In terms of assembly, NDH is composed of at least 16 different subunits, 5 of which are encoded in the nucleus.

It localises to the plastid. The protein localises to the chloroplast thylakoid membrane. It catalyses the reaction a plastoquinone + NADH + (n+1) H(+)(in) = a plastoquinol + NAD(+) + n H(+)(out). The enzyme catalyses a plastoquinone + NADPH + (n+1) H(+)(in) = a plastoquinol + NADP(+) + n H(+)(out). In terms of biological role, NDH shuttles electrons from NAD(P)H:plastoquinone, via FMN and iron-sulfur (Fe-S) centers, to quinones in the photosynthetic chain and possibly in a chloroplast respiratory chain. The immediate electron acceptor for the enzyme in this species is believed to be plastoquinone. Couples the redox reaction to proton translocation, and thus conserves the redox energy in a proton gradient. This chain is NAD(P)H-quinone oxidoreductase subunit 3, chloroplastic, found in Chaetosphaeridium globosum (Charophycean green alga).